Consider the following 142-residue polypeptide: Coactosin-like protein (142 aa).

Alanine 2 bears the N-acetylalanine mark. One can recognise an ADF-H domain in the interval alanine 2–lysine 130. Residues threonine 66 to lysine 75 form a flexible and important for F-actin binding region. 2 positions are modified to N6-acetyllysine: lysine 102 and lysine 126.

It belongs to the actin-binding proteins ADF family. Coactosin subfamily. Interacts with 5-lipoxygenase (ALOX5/5LO) in a calcium-independent manner. Binds to F-actin with a stoichiometry of 1:2.

It localises to the cytoplasm. It is found in the cytoskeleton. Its subcellular location is the nucleus. Functionally, binds to F-actin in a calcium-independent manner. Has no direct effect on actin depolymerization. Acts as a chaperone for ALOX5 (5LO), influencing both its stability and activity in leukotrienes synthesis. This chain is Coactosin-like protein (COTL1), found in Bos taurus (Bovine).